The following is a 112-amino-acid chain: MTTVISARVSGLRSTPSKLNLVADLIRGQDVSTAVMYLKFCRKKAAFLVGKVLKSAVANARANYDVDLDSLYVKEVLVGKSFTLRRVRPRARGRACRIRKRYGSVVIRLLKR.

Belongs to the universal ribosomal protein uL22 family. Part of the 50S ribosomal subunit.

In terms of biological role, this protein binds specifically to 23S rRNA; its binding is stimulated by other ribosomal proteins, e.g. L4, L17, and L20. It is important during the early stages of 50S assembly. It makes multiple contacts with different domains of the 23S rRNA in the assembled 50S subunit and ribosome. Functionally, the globular domain of the protein is located near the polypeptide exit tunnel on the outside of the subunit, while an extended beta-hairpin is found that lines the wall of the exit tunnel in the center of the 70S ribosome. This chain is Large ribosomal subunit protein uL22, found in Anaplasma marginale (strain Florida).